Here is a 142-residue protein sequence, read N- to C-terminus: Large ribosomal subunit protein uL13 (142 aa).

The protein belongs to the universal ribosomal protein uL13 family. In terms of assembly, part of the 50S ribosomal subunit.

This protein is one of the early assembly proteins of the 50S ribosomal subunit, although it is not seen to bind rRNA by itself. It is important during the early stages of 50S assembly. This Yersinia pseudotuberculosis serotype O:1b (strain IP 31758) protein is Large ribosomal subunit protein uL13.